Consider the following 893-residue polypeptide: Alanine--tRNA ligase (893 aa).

Belongs to the class-II aminoacyl-tRNA synthetase family.

It localises to the cytoplasm. The enzyme catalyses tRNA(Ala) + L-alanine + ATP = L-alanyl-tRNA(Ala) + AMP + diphosphate. Its function is as follows. Catalyzes the attachment of alanine to tRNA(Ala) in a two-step reaction: alanine is first activated by ATP to form Ala-AMP and then transferred to the acceptor end of tRNA(Ala). Also edits incorrectly charged Ser-tRNA(Ala) and Gly-tRNA(Ala) via its editing domain. The sequence is that of Alanine--tRNA ligase (alaS) from Leuconostoc mesenteroides subsp. mesenteroides (strain ATCC 8293 / DSM 20343 / BCRC 11652 / CCM 1803 / JCM 6124 / NCDO 523 / NBRC 100496 / NCIMB 8023 / NCTC 12954 / NRRL B-1118 / 37Y).